The chain runs to 367 residues: Hyaluronidase (367 aa).

2 disulfide bridges follow: Cys48–Cys337 and Cys214–Cys226. An N-linked (GlcNAc...) asparagine glycan is attached at Asn108. Glu138 acts as the Proton donor in catalysis. N-linked (GlcNAc...) asparagine glycosylation occurs at Asn354.

It belongs to the glycosyl hydrolase 56 family.

The catalysed reaction is Random hydrolysis of (1-&gt;4)-linkages between N-acetyl-beta-D-glucosamine and D-glucuronate residues in hyaluronate.. Its function is as follows. May play a role in reproduction. The polypeptide is Hyaluronidase (Polistes annularis (Paper wasp)).